The following is a 264-amino-acid chain: Putative hydro-lyase Cgl2544/cg2803 (264 aa).

Belongs to the D-glutamate cyclase family.

The polypeptide is Putative hydro-lyase Cgl2544/cg2803 (Corynebacterium glutamicum (strain ATCC 13032 / DSM 20300 / JCM 1318 / BCRC 11384 / CCUG 27702 / LMG 3730 / NBRC 12168 / NCIMB 10025 / NRRL B-2784 / 534)).